The chain runs to 198 residues: Recombination protein RecR (198 aa).

The C4-type zinc finger occupies 57–72 (CSVCHNITDTDPCRIC). A Toprim domain is found at 80 to 175 (SVICVVQDAK…KVTRIAHGLP (96 aa)).

Belongs to the RecR family.

In terms of biological role, may play a role in DNA repair. It seems to be involved in an RecBC-independent recombinational process of DNA repair. It may act with RecF and RecO. The chain is Recombination protein RecR from Halalkalibacterium halodurans (strain ATCC BAA-125 / DSM 18197 / FERM 7344 / JCM 9153 / C-125) (Bacillus halodurans).